The chain runs to 374 residues: tRNA-specific 2-thiouridylase MnmA (374 aa).

ATP-binding positions include 16–23 (GMSGGVDS) and M42. The segment at 102–104 (NPD) is interaction with target base in tRNA. The active-site Nucleophile is the C107. A disulfide bond links C107 and C203. G131 is an ATP binding site. The interval 153-155 (KDQ) is interaction with tRNA. The active-site Cysteine persulfide intermediate is C203. Positions 311 to 312 (RY) are interaction with tRNA.

Belongs to the MnmA/TRMU family.

Its subcellular location is the cytoplasm. It catalyses the reaction S-sulfanyl-L-cysteinyl-[protein] + uridine(34) in tRNA + AH2 + ATP = 2-thiouridine(34) in tRNA + L-cysteinyl-[protein] + A + AMP + diphosphate + H(+). Functionally, catalyzes the 2-thiolation of uridine at the wobble position (U34) of tRNA, leading to the formation of s(2)U34. The chain is tRNA-specific 2-thiouridylase MnmA from Exiguobacterium sibiricum (strain DSM 17290 / CCUG 55495 / CIP 109462 / JCM 13490 / 255-15).